Reading from the N-terminus, the 129-residue chain is uncharacterized protein (129 aa).

Positions 1–27 are cleaved as a signal peptide; it reads MLMRKKKLLSRISFGSLFLLCGTILSA. A lipid anchor (N-palmitoyl cysteine) is attached at Cys28. Residue Cys28 is the site of S-diacylglycerol cysteine attachment.

This sequence belongs to the MG439/MG440 family.

It is found in the cell membrane. This is an uncharacterized protein from Mycoplasma pneumoniae (strain ATCC 29342 / M129 / Subtype 1) (Mycoplasmoides pneumoniae).